Consider the following 280-residue polypeptide: Tryptophan 2,3-dioxygenase (280 aa).

Residues 49 to 53 (FIIIH), tyrosine 111, and arginine 115 contribute to the substrate site. Histidine 238 lines the heme pocket. Residue threonine 252 coordinates substrate.

The protein belongs to the tryptophan 2,3-dioxygenase family. Homotetramer. Requires heme as cofactor.

It carries out the reaction L-tryptophan + O2 = N-formyl-L-kynurenine. It functions in the pathway amino-acid degradation; L-tryptophan degradation via kynurenine pathway; L-kynurenine from L-tryptophan: step 1/2. In terms of biological role, heme-dependent dioxygenase that catalyzes the oxidative cleavage of the L-tryptophan (L-Trp) pyrrole ring and converts L-tryptophan to N-formyl-L-kynurenine. Catalyzes the oxidative cleavage of the indole moiety. This is Tryptophan 2,3-dioxygenase from Geobacillus thermodenitrificans (strain NG80-2).